The sequence spans 318 residues: Mechanosensory protein 3 (318 aa).

LIM zinc-binding domains lie at 27–86 (NKCY…DYSA) and 87–152 (HRCA…PMDD). Positions 214–273 (RRGPRTTIRQNQLDVLNEMFSNTPKPSKHARAKLALETGLSMRVIQVWFQNRRSKERRLK) form a DNA-binding region, homeobox.

Its subcellular location is the nucleus. Functionally, specifies differentiation of the set of six touch receptor neurons. Binds cooperatively as a heterodimer with unc-86 to sites in the mec-3 gene promoter. The sequence is that of Mechanosensory protein 3 (mec-3) from Caenorhabditis briggsae.